The primary structure comprises 296 residues: 4-amino-4-deoxyprephenate dehydrogenase (296 aa).

The 280-residue stretch at 9–288 (RCVVVGGAGA…EHGAELERLC (280 aa)) folds into the Prephenate/arogenate dehydrogenase domain.

The protein belongs to the prephenate/arogenate dehydrogenase family.

The catalysed reaction is 4-amino-4-deoxyprephenate + NAD(+) = 3-(4-aminophenyl)pyruvate + CO2 + NADH + H(+). The protein operates within antibiotic biosynthesis. Involved in pristinamycin I biosynthesis. Probably catalyzes the formation of 3-(4-aminophenyl)pyruvate from 4-amino-4-deoxyprephenate. This is 4-amino-4-deoxyprephenate dehydrogenase from Streptomyces pristinaespiralis.